A 54-amino-acid polypeptide reads, in one-letter code: Potassium channel toxin alpha-KTx 14.5 (54 aa).

The signal sequence occupies residues 1-23 (MKIFFAILLILAVCSMAIWTVNG). Cystine bridges form between cysteine 30-cysteine 46, cysteine 36-cysteine 51, and cysteine 40-cysteine 53.

This sequence belongs to the short scorpion toxin superfamily. Potassium channel inhibitor family. Alpha-KTx 14 subfamily. In terms of tissue distribution, expressed by the venom gland.

It localises to the secreted. Its function is as follows. Inhibits potassium channels. May be active towards small conductance calcium-activated potassium channels (KCNN, SK), and less active towards voltage-gated potassium channels (Kv/KCN). This is Potassium channel toxin alpha-KTx 14.5 from Mesobuthus gibbosus (Mediterranean checkered scorpion).